Consider the following 298-residue polypeptide: 4-hydroxy-tetrahydrodipicolinate synthase (298 aa).

Thr45 is a binding site for pyruvate. Tyr133 functions as the Proton donor/acceptor in the catalytic mechanism. Residue Lys161 is the Schiff-base intermediate with substrate of the active site. A pyruvate-binding site is contributed by Ile203.

It belongs to the DapA family. As to quaternary structure, homotetramer; dimer of dimers.

The protein resides in the cytoplasm. It catalyses the reaction L-aspartate 4-semialdehyde + pyruvate = (2S,4S)-4-hydroxy-2,3,4,5-tetrahydrodipicolinate + H2O + H(+). The protein operates within amino-acid biosynthesis; L-lysine biosynthesis via DAP pathway; (S)-tetrahydrodipicolinate from L-aspartate: step 3/4. Catalyzes the condensation of (S)-aspartate-beta-semialdehyde [(S)-ASA] and pyruvate to 4-hydroxy-tetrahydrodipicolinate (HTPA). The sequence is that of 4-hydroxy-tetrahydrodipicolinate synthase from Wigglesworthia glossinidia brevipalpis.